Here is a 1006-residue protein sequence, read N- to C-terminus: Phosphatidylinositol 4,5-bisphosphate 5-phosphatase A (1006 aa).

The interval 1 to 416 (MEGQSSRGSR…SSSPWSAQPT (416 aa)) is disordered. Residues 27–41 (VAQTGAPSKVDSSFQ) show a composition bias toward polar residues. R56 bears the Asymmetric dimethylarginine; alternate mark. Residue R56 is modified to Omega-N-methylarginine; alternate. R65 bears the Omega-N-methylarginine mark. R76 carries the post-translational modification Asymmetric dimethylarginine. R83 carries the asymmetric dimethylarginine; alternate modification. Omega-N-methylarginine; alternate is present on R83. Over residues 94 to 112 (GQKTATAHRSSSLAPTSVG) the composition is skewed to polar residues. The RSXSXX motif 1 motif lies at 102 to 107 (RSSSLA). Residues 180–193 (LAASGLSLALASEE) are compositionally biased toward low complexity. Residues 196–209 (PELPSTPSPVPSPV) are compositionally biased toward pro residues. The segment covering 210–234 (LSPTQEQALAPASTASGAASVGQTS) has biased composition (low complexity). Positions 256–273 (PAQTSGPTGSPPCIQTSP) are enriched in polar residues. Phosphoserine is present on residues S291 and S324. A compositionally biased stretch (pro residues) spans 337 to 347 (VPPPLPKPPRS). The SH3-binding signature appears at 345–350 (PRSPSR). Low complexity-rich tracts occupy residues 348–360 (PSRS…NRSP) and 398–409 (TTSSSTSTLSSS). Positions 350–355 (RSPSHS) match the RSXSXX motif 2 motif. A catalytic region spans residues 425-728 (ITVVTWNVGT…SDHKPVAAQF (304 aa)). The interval 729–840 (LLQFAFRDDM…IGITEPFQIS (112 aa)) is required for ruffle localization. Residues 844–858 (SELASSSTDSSGTSS) are compositionally biased toward low complexity. The segment at 844–1006 (SELASSSTDS…RGLEEGGLGP (163 aa)) is disordered. 2 consecutive short sequence motifs (RSXSXX motif) follow at residues 874–879 (RSPSPG) and 885–890 (RSRSPG). S903 carries the phosphoserine modification. The short motif at 911 to 916 (RSPSPQ) is the RSXSXX motif 5 element. A compositionally biased stretch (low complexity) spans 927–946 (RSSNGSSRGSSEEGPSGLPG). S990 is subject to Phosphoserine.

Belongs to the inositol 1,4,5-trisphosphate 5-phosphatase type II family.

Its subcellular location is the cytoplasm. It catalyses the reaction 1D-myo-inositol 1,4,5-trisphosphate + H2O = 1D-myo-inositol 1,4-bisphosphate + phosphate. The enzyme catalyses 1D-myo-inositol 1,3,4,5-tetrakisphosphate + H2O = 1D-myo-inositol 1,3,4-trisphosphate + phosphate. The catalysed reaction is a 1,2-diacyl-sn-glycero-3-phospho-(1D-myo-inositol-4,5-bisphosphate) + H2O = a 1,2-diacyl-sn-glycero-3-phospho-(1D-myo-inositol 4-phosphate) + phosphate. Inositol 5-phosphatase, which converts inositol 1,4,5-trisphosphate to inositol 1,4-bisphosphate. Also converts phosphatidylinositol 4,5-bisphosphate to phosphatidylinositol 4-phosphate and inositol 1,3,4,5-tetrakisphosphate to inositol 1,3,4-trisphosphate in vitro. May be involved in modulation of the function of inositol and phosphatidylinositol polyphosphate-binding proteins that are present at membranes ruffles. This Homo sapiens (Human) protein is Phosphatidylinositol 4,5-bisphosphate 5-phosphatase A (INPP5J).